A 389-amino-acid chain; its full sequence is Succinate--CoA ligase [ADP-forming] subunit beta (389 aa).

The region spanning 9 to 244 (KQLFEHYGLP…LTQNDAREAE (236 aa)) is the ATP-grasp domain. Residues lysine 46, 53–55 (GRG), glutamate 99, cysteine 102, and glutamate 107 each bind ATP. Asparagine 199 and aspartate 213 together coordinate Mg(2+). Substrate is bound by residues asparagine 264 and 321-323 (GIV).

The protein belongs to the succinate/malate CoA ligase beta subunit family. As to quaternary structure, heterotetramer of two alpha and two beta subunits. Mg(2+) serves as cofactor.

The catalysed reaction is succinate + ATP + CoA = succinyl-CoA + ADP + phosphate. The enzyme catalyses GTP + succinate + CoA = succinyl-CoA + GDP + phosphate. Its pathway is carbohydrate metabolism; tricarboxylic acid cycle; succinate from succinyl-CoA (ligase route): step 1/1. Succinyl-CoA synthetase functions in the citric acid cycle (TCA), coupling the hydrolysis of succinyl-CoA to the synthesis of either ATP or GTP and thus represents the only step of substrate-level phosphorylation in the TCA. The beta subunit provides nucleotide specificity of the enzyme and binds the substrate succinate, while the binding sites for coenzyme A and phosphate are found in the alpha subunit. This is Succinate--CoA ligase [ADP-forming] subunit beta from Haemophilus influenzae (strain ATCC 51907 / DSM 11121 / KW20 / Rd).